The primary structure comprises 136 residues: Large ribosomal subunit protein eL27A (136 aa).

The protein belongs to the eukaryotic ribosomal protein eL27 family. Component of the large ribosomal subunit (LSU). Mature yeast ribosomes consist of a small (40S) and a large (60S) subunit. The 40S small subunit contains 1 molecule of ribosomal RNA (18S rRNA) and at least 33 different proteins. The large 60S subunit contains 3 rRNA molecules (25S, 5.8S and 5S rRNA) and at least 46 different proteins.

Its subcellular location is the cytoplasm. The protein localises to the nucleus. Component of the ribosome, a large ribonucleoprotein complex responsible for the synthesis of proteins in the cell. The small ribosomal subunit (SSU) binds messenger RNAs (mRNAs) and translates the encoded message by selecting cognate aminoacyl-transfer RNA (tRNA) molecules. The large subunit (LSU) contains the ribosomal catalytic site termed the peptidyl transferase center (PTC), which catalyzes the formation of peptide bonds, thereby polymerizing the amino acids delivered by tRNAs into a polypeptide chain. The nascent polypeptides leave the ribosome through a tunnel in the LSU and interact with protein factors that function in enzymatic processing, targeting, and the membrane insertion of nascent chains at the exit of the ribosomal tunnel. This is Large ribosomal subunit protein eL27A (rpl2701) from Schizosaccharomyces pombe (strain 972 / ATCC 24843) (Fission yeast).